The primary structure comprises 1004 residues: Zinc finger protein 316 (1004 aa).

Residues M1–D148 are disordered. The residue at position 2 (A2) is an N-acetylalanine. T7 is subject to Phosphothreonine. S10 carries the phosphoserine modification. The span at G21–V60 shows a compositional bias: acidic residues. The span at A61 to V72 shows a compositional bias: low complexity. Residues A73–C95 show a composition bias toward acidic residues. At S112 the chain carries Phosphoserine. The segment covering E132 to D148 has biased composition (acidic residues). Residues V158–I229 enclose the KRAB domain. 5 C2H2-type zinc fingers span residues T345 to H367, F373 to H395, F401 to H423, Y429 to H451, and Y457 to H479. The C2H2-type 6; degenerate zinc finger occupies H485–A512. The segment at G508 to P574 is disordered. The span at E531–E557 shows a compositional bias: acidic residues. 5 consecutive C2H2-type zinc fingers follow at residues W691–H713, H719–H741, F747–H769, F775–H797, and Y803–H825. K829 participates in a covalent cross-link: Glycyl lysine isopeptide (Lys-Gly) (interchain with G-Cter in SUMO2). 4 C2H2-type zinc fingers span residues H831–H853, F859–H881, F887–H909, and Y915–H937. A disordered region spans residues T936 to L976. Over residues G939–P968 the composition is skewed to low complexity. A Glycyl lysine isopeptide (Lys-Gly) (interchain with G-Cter in SUMO2) cross-link involves residue K955.

The protein belongs to the krueppel C2H2-type zinc-finger protein family.

The protein localises to the nucleus. Its function is as follows. May be involved in transcriptional regulation. The protein is Zinc finger protein 316 (ZNF316) of Homo sapiens (Human).